Reading from the N-terminus, the 534-residue chain is Prolyl 4-hydroxylase subunit alpha-1 (534 aa).

Positions 1 to 17 are cleaved as a signal peptide; sequence MIWYILVVGILLPQSLA. An N-linked (GlcNAc...) asparagine glycan is attached at N113. A TPR repeat occupies 205–238; sequence VSVLDYLSYAVYQQGDLDKALLLTKKLLELDPEH. A disordered region spans residues 258-277; the sequence is ANKSSSDDQSDQKTTLKKKG. The N-linked (GlcNAc...) asparagine glycan is linked to N259. A Fe2OG dioxygenase domain is found at 411-519; that stretch reads TAEELQVANY…KWVSNKWLHE (109 aa). Positions 429, 431, and 500 each coordinate Fe cation. A 2-oxoglutarate-binding site is contributed by K510.

The protein belongs to the P4HA family. Heterotetramer of two alpha-1 chains and two beta chains (P4HB)(the beta chain is the multi-functional PDI), where P4HB plays the role of a structural subunit; this tetramer catalyzes the formation of 4-hydroxyproline in collagen. It depends on Fe(2+) as a cofactor. L-ascorbate is required as a cofactor.

The protein localises to the endoplasmic reticulum lumen. The catalysed reaction is L-prolyl-[collagen] + 2-oxoglutarate + O2 = trans-4-hydroxy-L-prolyl-[collagen] + succinate + CO2. Catalyzes the post-translational formation of 4-hydroxyproline in -Xaa-Pro-Gly- sequences in collagens and other proteins. In Bos taurus (Bovine), this protein is Prolyl 4-hydroxylase subunit alpha-1 (P4HA1).